A 605-amino-acid chain; its full sequence is Apoptosis-inducing factor 3 (605 aa).

The tract at residues 22–45 (KERGKEELSASGKGSPRAYQGNGT) is disordered. A Rieske domain is found at 70 to 165 (AAVCHVKDLE…VKIEKEKVYV (96 aa)). Positions 109, 111, 128, and 131 each coordinate [2Fe-2S] cluster. Residues 201–205 (GAGAA), Arg235, Lys240, Val270, Asp467, and Trp514 contribute to the FAD site.

This sequence belongs to the FAD-dependent oxidoreductase family. As to expression, ubiquitous. Expressed in bone marrow, cerebral cortex, liver, ovary, thymus, thyroid gland and tongue (at protein level).

It localises to the mitochondrion. In terms of biological role, induces apoptosis through a caspase dependent pathway. Reduces mitochondrial membrane potential. The chain is Apoptosis-inducing factor 3 (AIFM3) from Homo sapiens (Human).